Here is a 443-residue protein sequence, read N- to C-terminus: tRNA modification GTPase MnmE (443 aa).

(6S)-5-formyl-5,6,7,8-tetrahydrofolate contacts are provided by Arg23, Glu82, and Lys121. The 150-residue stretch at Gly215–Gln364 folds into the TrmE-type G domain. Asn225 contacts K(+). Residues Asn225–Ser230, Thr244–Thr250, and Asp269–Gly272 each bind GTP. Ser229 is a Mg(2+) binding site. Positions 244, 246, and 249 each coordinate K(+). Position 250 (Thr250) interacts with Mg(2+). Residue Lys443 participates in (6S)-5-formyl-5,6,7,8-tetrahydrofolate binding.

It belongs to the TRAFAC class TrmE-Era-EngA-EngB-Septin-like GTPase superfamily. TrmE GTPase family. In terms of assembly, homodimer. Heterotetramer of two MnmE and two MnmG subunits. K(+) is required as a cofactor.

It is found in the cytoplasm. Exhibits a very high intrinsic GTPase hydrolysis rate. Involved in the addition of a carboxymethylaminomethyl (cmnm) group at the wobble position (U34) of certain tRNAs, forming tRNA-cmnm(5)s(2)U34. The polypeptide is tRNA modification GTPase MnmE (Chlamydia abortus (strain DSM 27085 / S26/3) (Chlamydophila abortus)).